The primary structure comprises 158 residues: 2-C-methyl-D-erythritol 2,4-cyclodiphosphate synthase (158 aa).

Positions 9 and 11 each coordinate a divalent metal cation. 4-CDP-2-C-methyl-D-erythritol 2-phosphate contacts are provided by residues 9 to 11 (DVH) and 35 to 36 (HS). A divalent metal cation is bound at residue H43. 4-CDP-2-C-methyl-D-erythritol 2-phosphate-binding positions include 57–59 (DIG), 62–66 (FPDTD), 101–107 (AQKPKMA), 133–136 (TTTE), F140, and R143.

This sequence belongs to the IspF family. As to quaternary structure, homotrimer. A divalent metal cation serves as cofactor.

The catalysed reaction is 4-CDP-2-C-methyl-D-erythritol 2-phosphate = 2-C-methyl-D-erythritol 2,4-cyclic diphosphate + CMP. The protein operates within isoprenoid biosynthesis; isopentenyl diphosphate biosynthesis via DXP pathway; isopentenyl diphosphate from 1-deoxy-D-xylulose 5-phosphate: step 4/6. Functionally, involved in the biosynthesis of isopentenyl diphosphate (IPP) and dimethylallyl diphosphate (DMAPP), two major building blocks of isoprenoid compounds. Catalyzes the conversion of 4-diphosphocytidyl-2-C-methyl-D-erythritol 2-phosphate (CDP-ME2P) to 2-C-methyl-D-erythritol 2,4-cyclodiphosphate (ME-CPP) with a corresponding release of cytidine 5-monophosphate (CMP). This chain is 2-C-methyl-D-erythritol 2,4-cyclodiphosphate synthase, found in Geobacillus sp. (strain WCH70).